Here is a 137-residue protein sequence, read N- to C-terminus: Large ribosomal subunit protein uL16 (137 aa).

The protein belongs to the universal ribosomal protein uL16 family. In terms of assembly, part of the 50S ribosomal subunit.

Binds 23S rRNA and is also seen to make contacts with the A and possibly P site tRNAs. In Agrobacterium fabrum (strain C58 / ATCC 33970) (Agrobacterium tumefaciens (strain C58)), this protein is Large ribosomal subunit protein uL16.